The primary structure comprises 310 residues: Malate dehydrogenase (310 aa).

NAD(+)-binding positions include 7-12 and Asp32; that span reads GAGNVG. Substrate is bound by residues Arg81 and Arg87. NAD(+)-binding positions include Asn94 and 117 to 119; that span reads VSN. Substrate contacts are provided by Asn119 and Arg150. The Proton acceptor role is filled by His174.

This sequence belongs to the LDH/MDH superfamily. MDH type 3 family.

The catalysed reaction is (S)-malate + NAD(+) = oxaloacetate + NADH + H(+). In terms of biological role, catalyzes the reversible oxidation of malate to oxaloacetate. This chain is Malate dehydrogenase, found in Pelodictyon phaeoclathratiforme (strain DSM 5477 / BU-1).